Consider the following 290-residue polypeptide: Eukaryotic translation initiation factor 3 subunit G (290 aa).

Residues Met1 to Ala12 are compositionally biased toward basic and acidic residues. Disordered regions lie at residues Met1–Ala30 and Ala173–Ala192. Residues Pro204–Pro285 enclose the RRM domain.

Belongs to the eIF-3 subunit G family. As to quaternary structure, component of the eukaryotic translation initiation factor 3 (eIF-3) complex.

It is found in the cytoplasm. Its function is as follows. RNA-binding component of the eukaryotic translation initiation factor 3 (eIF-3) complex, which is involved in protein synthesis of a specialized repertoire of mRNAs and, together with other initiation factors, stimulates binding of mRNA and methionyl-tRNAi to the 40S ribosome. The eIF-3 complex specifically targets and initiates translation of a subset of mRNAs involved in cell proliferation. This subunit can bind 18S rRNA. This Cryptococcus neoformans var. neoformans serotype D (strain B-3501A) (Filobasidiella neoformans) protein is Eukaryotic translation initiation factor 3 subunit G.